The chain runs to 268 residues: Glutamate racemase (268 aa).

Residues 13 to 14 (DS) and 45 to 46 (YG) contribute to the substrate site. The Proton donor/acceptor role is filled by Cys77. Substrate is bound at residue 78–79 (NT). The Proton donor/acceptor role is filled by Cys185. 186-187 (TH) is a substrate binding site.

This sequence belongs to the aspartate/glutamate racemases family.

It catalyses the reaction L-glutamate = D-glutamate. It participates in cell wall biogenesis; peptidoglycan biosynthesis. Provides the (R)-glutamate required for cell wall biosynthesis. The sequence is that of Glutamate racemase from Vibrio campbellii (strain ATCC BAA-1116).